Reading from the N-terminus, the 305-residue chain is GMP synthase [glutamine-hydrolyzing] subunit B (305 aa).

The 183-residue stretch at 2-184 folds into the GMPS ATP-PPase domain; sequence VNIEKFIDQA…LGLPAEIQHR (183 aa). 29–35 contacts ATP; it reads SGGVDSS.

As to quaternary structure, heterodimer composed of a glutamine amidotransferase subunit (A) and a GMP-binding subunit (B).

The catalysed reaction is XMP + L-glutamine + ATP + H2O = GMP + L-glutamate + AMP + diphosphate + 2 H(+). It participates in purine metabolism; GMP biosynthesis; GMP from XMP (L-Gln route): step 1/1. In terms of biological role, catalyzes the synthesis of GMP from XMP. The sequence is that of GMP synthase [glutamine-hydrolyzing] subunit B from Methanoculleus marisnigri (strain ATCC 35101 / DSM 1498 / JR1).